Here is a 347-residue protein sequence, read N- to C-terminus: Pre-B-cell leukemia transcription factor 1 (347 aa).

The segment at 1–37 (MDDQPRLMHSHPGVGMAGHPSLSQHMQDGTGANEGDV) is disordered. In terms of domain architecture, PBC spans 38 to 232 (GRKQDIGDIL…VMILRSRFLD (195 aa)). Positions 45–124 (DILQQIMTIT…EGVAGPEKGG (80 aa)) are PBC-A. A PBC-B region spans residues 127–232 (AAAAAAAAAS…VMILRSRFLD (106 aa)). A DNA-binding region (homeobox; TALE-type) is located at residues 233–295 (ARRKRRNFNK…NKRIRYKKNI (63 aa)). Residues 318 to 331 (VHGSQANSPSTPSS) show a composition bias toward polar residues. Residues 318–347 (VHGSQANSPSTPSSAGGYPSPCYQSDRRIQ) form a disordered region.

The protein belongs to the TALE/PBX homeobox family. In terms of assembly, forms a heterodimer with isoform 2 of meis1; the interaction is necessary for neural fate induction. In terms of tissue distribution, shows broad, weak expression from blastula through gastrula stages. At stage 14/15, expressed in a broad arc that gives rise to the forebrain and eyes. More intensely expressed in the lateral neural folds (presumptive neural crest) and as horizontal stripes in the posterior neural plate that give rise to the hindbrain. As development proceeds, expression progresses posteriorly along the neural folds and at stage 21, expression is pronounced in the prospective hindbrain and in migratory neural crest cells. At later stages (stage 26), expression becomes intense within the dorsal portion of the forebrain, and in the optic cup, caudal branchial arch, peripheral to the pronephric anlage, and in the dorsal anterior half of the spinal cord. Expression remains robust in the hindbrain but gradually becomes more restricted. At stage 28, expressed in the dorsal lateral portion of the neural tube and in the somatic layer of the lateral plate mesoderm that surrounds the pronephric anlage.

It localises to the nucleus. Functionally, acts as a transcriptional activator in complex with isoform 2 of meis1, to induce posterior neural and neural crest gene expression, and thereby specify hindbrain and neural crest cell fate. Binds to a highly conserved region in the promoter of the neural crest gene zic3. Required for the nuclear transport or retention of isoform 2 of meis1. The polypeptide is Pre-B-cell leukemia transcription factor 1 (pbx1) (Xenopus laevis (African clawed frog)).